Reading from the N-terminus, the 105-residue chain is Small ribosomal subunit protein uS10 (105 aa).

This sequence belongs to the universal ribosomal protein uS10 family. In terms of assembly, part of the 30S ribosomal subunit.

Its function is as follows. Involved in the binding of tRNA to the ribosomes. In Picosynechococcus sp. (strain ATCC 27264 / PCC 7002 / PR-6) (Agmenellum quadruplicatum), this protein is Small ribosomal subunit protein uS10.